The sequence spans 269 residues: Flagellar hook-basal body complex protein FlhP (269 aa).

Positions 7–65 (TASTTLNQLQQQIDTISSNLSNSNTTGYKAKDTNFSELVRQQFDQVDEKNEEVAKARKT) form a coiled coil.

This sequence belongs to the flagella basal body rod proteins family.

This is Flagellar hook-basal body complex protein FlhP (flhP) from Bacillus subtilis (strain 168).